Reading from the N-terminus, the 423-residue chain is ATP-citrate synthase alpha chain protein 2 (423 aa).

Residues asparagine 343, threonine 345, and arginine 376 each contribute to the citrate site.

This sequence belongs to the succinate/malate CoA ligase beta subunit family. In terms of assembly, heterooctamer of 4 alpha and 4 beta chains.

It is found in the cytoplasm. It localises to the cytosol. It carries out the reaction oxaloacetate + acetyl-CoA + ADP + phosphate = citrate + ATP + CoA. In terms of biological role, ATP citrate-lyase is the primary enzyme responsible for the synthesis of cytosolic acetyl-CoA, used for the elongation of fatty acids and biosynthesis of isoprenoids, flavonoids and malonated derivatives. May supply substrate to the cytosolic acetyl-CoA carboxylase, which generates the malonyl-CoA used for the synthesis of a multitude of compounds, including very long chain fatty acids and flavonoids. In contrast to all known animal ACL enzymes having a homomeric structure, plant ACLs are composed of alpha and beta chains. The chain is ATP-citrate synthase alpha chain protein 2 (ACLA-2) from Oryza sativa subsp. japonica (Rice).